The sequence spans 386 residues: NADH kinase pos5, mitochondrial (386 aa).

A mitochondrion-targeting transit peptide spans 1-42; that stretch reads MIRAANGFRISVRNTAVCLAPNFRQLKGFSIINLGSLQYFRY.

Belongs to the NAD kinase family.

The protein localises to the mitochondrion. It carries out the reaction NADH + ATP = ADP + NADPH + H(+). Functionally, phosphorylates both NADH and NAD(+), with a preference for NADH. Anti-oxidant factor and key source of the cellular reductant NADPH. The chain is NADH kinase pos5, mitochondrial (pos5) from Schizosaccharomyces pombe (strain 972 / ATCC 24843) (Fission yeast).